Reading from the N-terminus, the 252-residue chain is Adenosylcobinamide-GDP ribazoletransferase (252 aa).

Transmembrane regions (helical) follow at residues 4–24, 38–58, 60–80, 113–133, 141–161, 190–210, and 232–252; these read LFKG…PYVE, PIIG…INYL, ISIV…TGML, FSVI…HSFL, ILMF…ITII, LVCI…LLIV, and VAGF…CLFT.

This sequence belongs to the CobS family. The cofactor is Mg(2+).

It localises to the cell membrane. The enzyme catalyses alpha-ribazole + adenosylcob(III)inamide-GDP = adenosylcob(III)alamin + GMP + H(+). The catalysed reaction is alpha-ribazole 5'-phosphate + adenosylcob(III)inamide-GDP = adenosylcob(III)alamin 5'-phosphate + GMP + H(+). It participates in cofactor biosynthesis; adenosylcobalamin biosynthesis; adenosylcobalamin from cob(II)yrinate a,c-diamide: step 7/7. Joins adenosylcobinamide-GDP and alpha-ribazole to generate adenosylcobalamin (Ado-cobalamin). Also synthesizes adenosylcobalamin 5'-phosphate from adenosylcobinamide-GDP and alpha-ribazole 5'-phosphate. This chain is Adenosylcobinamide-GDP ribazoletransferase, found in Clostridium botulinum (strain Eklund 17B / Type B).